The following is a 153-amino-acid chain: Large ribosomal subunit protein bL9 (153 aa).

This sequence belongs to the bacterial ribosomal protein bL9 family.

In terms of biological role, binds to the 23S rRNA. In Tropheryma whipplei (strain Twist) (Whipple's bacillus), this protein is Large ribosomal subunit protein bL9.